Reading from the N-terminus, the 296-residue chain is Ribosomal RNA small subunit methyltransferase H (296 aa).

Residues 38 to 40, Glu-57, Phe-80, Asp-103, and His-110 each bind S-adenosyl-L-methionine; that span reads GVH.

Belongs to the methyltransferase superfamily. RsmH family.

The protein localises to the cytoplasm. The catalysed reaction is cytidine(1402) in 16S rRNA + S-adenosyl-L-methionine = N(4)-methylcytidine(1402) in 16S rRNA + S-adenosyl-L-homocysteine + H(+). In terms of biological role, specifically methylates the N4 position of cytidine in position 1402 (C1402) of 16S rRNA. This is Ribosomal RNA small subunit methyltransferase H from Borreliella burgdorferi (strain ATCC 35210 / DSM 4680 / CIP 102532 / B31) (Borrelia burgdorferi).